We begin with the raw amino-acid sequence, 535 residues long: Prolyl 4-hydroxylase subunit alpha-2 (535 aa).

Residues 1–21 (MKLWVSALLMAWFGVLSCVQA) form the signal peptide. N115 is a glycosylation site (N-linked (GlcNAc...) asparagine). A TPR repeat occupies 207–240 (SQVLDYLSYAVFQLGDLHRALELTRRLLSLDPSH). The N-linked (GlcNAc...) asparagine glycan is linked to N264. Positions 412 to 520 (TAELLQVANY…KWVSNKWFHE (109 aa)) constitute a Fe2OG dioxygenase domain. Positions 430 and 432 each coordinate Fe cation. K480 carries the post-translational modification N6-succinyllysine. Fe cation is bound at residue H501. Position 511 (K511) interacts with 2-oxoglutarate.

This sequence belongs to the P4HA family. As to quaternary structure, heterotetramer of two alpha-2 chains and two beta chains (P4HB) (the beta chain is the multi-functional PDI), where P4HB plays the role of a structural subunit; this tetramer catalyzes the formation of 4-hydroxyproline in collagen. The cofactor is Fe(2+). L-ascorbate is required as a cofactor. Expressed in the heart, placenta, lung and pancreas.

The protein localises to the endoplasmic reticulum lumen. The enzyme catalyses L-prolyl-[collagen] + 2-oxoglutarate + O2 = trans-4-hydroxy-L-prolyl-[collagen] + succinate + CO2. Its activity is regulated as follows. Inhibited by poly(L-proline) only at very high concentrations. Its function is as follows. Catalyzes the post-translational formation of 4-hydroxyproline in -Xaa-Pro-Gly- sequences in collagens and other proteins. The sequence is that of Prolyl 4-hydroxylase subunit alpha-2 (P4HA2) from Homo sapiens (Human).